Reading from the N-terminus, the 669-residue chain is DNA ligase (669 aa).

NAD(+) is bound by residues 31 to 35 (DAEYD), 80 to 81 (SL), and Glu112. The active-site N6-AMP-lysine intermediate is Lys114. Residues Arg135, Glu172, Lys289, and Lys313 each contribute to the NAD(+) site. Zn(2+) contacts are provided by Cys407, Cys410, Cys425, and Cys431. Residues 591 to 669 (SVPQPLADKV…EEQLIEILNN (79 aa)) form the BRCT domain.

It belongs to the NAD-dependent DNA ligase family. LigA subfamily. Mg(2+) serves as cofactor. It depends on Mn(2+) as a cofactor.

It carries out the reaction NAD(+) + (deoxyribonucleotide)n-3'-hydroxyl + 5'-phospho-(deoxyribonucleotide)m = (deoxyribonucleotide)n+m + AMP + beta-nicotinamide D-nucleotide.. In terms of biological role, DNA ligase that catalyzes the formation of phosphodiester linkages between 5'-phosphoryl and 3'-hydroxyl groups in double-stranded DNA using NAD as a coenzyme and as the energy source for the reaction. It is essential for DNA replication and repair of damaged DNA. This Aliivibrio salmonicida (strain LFI1238) (Vibrio salmonicida (strain LFI1238)) protein is DNA ligase.